A 123-amino-acid polypeptide reads, in one-letter code: Histone H2B (123 aa).

The tract at residues 1–32 (MPPKAASKGAKKAASKAKAARSTDKKKRRRRR) is disordered. Over residues 9–32 (GAKKAASKAKAARSTDKKKRRRRR) the composition is skewed to basic residues. Residue serine 110 is glycosylated (O-linked (GlcNAc) serine). Residue lysine 118 forms a Glycyl lysine isopeptide (Lys-Gly) (interchain with G-Cter in ubiquitin) linkage.

This sequence belongs to the histone H2B family. The nucleosome is a histone octamer containing two molecules each of H2A, H2B, H3 and H4 assembled in one H3-H4 heterotetramer and two H2A-H2B heterodimers. The octamer wraps approximately 147 bp of DNA. Monoubiquitination of Lys-118 gives a specific tag for epigenetic transcriptional activation and is also prerequisite for histone H3 'Lys-4' and 'Lys-79' methylation.

Its subcellular location is the nucleus. It is found in the chromosome. Core component of nucleosome. Nucleosomes wrap and compact DNA into chromatin, limiting DNA accessibility to the cellular machineries which require DNA as a template. Histones thereby play a central role in transcription regulation, DNA repair, DNA replication and chromosomal stability. DNA accessibility is regulated via a complex set of post-translational modifications of histones, also called histone code, and nucleosome remodeling. The sequence is that of Histone H2B from Urechis caupo (Innkeeper worm).